Here is a 478-residue protein sequence, read N- to C-terminus: Protein nucleotidyltransferase YdiU (478 aa).

ATP is bound by residues G84, G86, R87, K107, D119, G120, R170, and R177. The Proton acceptor role is filled by D246. Residues N247 and D256 each contribute to the Mg(2+) site. Position 256 (D256) interacts with ATP.

This sequence belongs to the SELO family. Mg(2+) serves as cofactor. The cofactor is Mn(2+).

The enzyme catalyses L-seryl-[protein] + ATP = 3-O-(5'-adenylyl)-L-seryl-[protein] + diphosphate. It carries out the reaction L-threonyl-[protein] + ATP = 3-O-(5'-adenylyl)-L-threonyl-[protein] + diphosphate. It catalyses the reaction L-tyrosyl-[protein] + ATP = O-(5'-adenylyl)-L-tyrosyl-[protein] + diphosphate. The catalysed reaction is L-histidyl-[protein] + UTP = N(tele)-(5'-uridylyl)-L-histidyl-[protein] + diphosphate. The enzyme catalyses L-seryl-[protein] + UTP = O-(5'-uridylyl)-L-seryl-[protein] + diphosphate. It carries out the reaction L-tyrosyl-[protein] + UTP = O-(5'-uridylyl)-L-tyrosyl-[protein] + diphosphate. Nucleotidyltransferase involved in the post-translational modification of proteins. It can catalyze the addition of adenosine monophosphate (AMP) or uridine monophosphate (UMP) to a protein, resulting in modifications known as AMPylation and UMPylation. The sequence is that of Protein nucleotidyltransferase YdiU from Escherichia coli O139:H28 (strain E24377A / ETEC).